A 151-amino-acid chain; its full sequence is Histone H2B.1 (151 aa).

2 stretches are compositionally biased toward basic and acidic residues: residues 1-28 and 36-51; these read MAPK…EKAP and EKRL…GEGK. Residues 1-58 are disordered; it reads MAPKAEKKPAAKKPAEEEPATEKVEKAPAGKKPKAEKRLPAGKSKEGGEGKKGKKKAK. Lys7 and Lys37 each carry N6-acetyllysine. Residue Lys147 forms a Glycyl lysine isopeptide (Lys-Gly) (interchain with G-Cter in ubiquitin) linkage.

Belongs to the histone H2B family. The nucleosome is a histone octamer containing two molecules each of H2A, H2B, H3 and H4 assembled in one H3-H4 heterotetramer and two H2A-H2B heterodimers. The octamer wraps approximately 147 bp of DNA. Post-translationally, can be acetylated to form H2BK6ac and H2BK33ac. Monoubiquitinated to form H2BK143ub1; may give a specific tag for epigenetic transcriptional activation.

It localises to the nucleus. Its subcellular location is the chromosome. Its function is as follows. Core component of nucleosome. Nucleosomes wrap and compact DNA into chromatin, limiting DNA accessibility to the cellular machineries which require DNA as a template. Histones thereby play a central role in transcription regulation, DNA repair, DNA replication and chromosomal stability. DNA accessibility is regulated via a complex set of post-translational modifications of histones, also called histone code, and nucleosome remodeling. The protein is Histone H2B.1 of Zea mays (Maize).